A 153-amino-acid chain; its full sequence is Peptide methionine sulfoxide reductase B6 (153 aa).

Residues 28–149 (NEEWRTVLSP…NSVALKFSSA (122 aa)) enclose the MsrB domain. 4 residues coordinate Zn(2+): Cys67, Cys70, Cys113, and Cys116. Cys85 and Cys138 are joined by a disulfide. Residue Cys138 is the Nucleophile of the active site.

It belongs to the MsrB Met sulfoxide reductase family. It depends on Zn(2+) as a cofactor.

It localises to the cytoplasm. The protein localises to the cytosol. The enzyme catalyses L-methionyl-[protein] + [thioredoxin]-disulfide + H2O = L-methionyl-(R)-S-oxide-[protein] + [thioredoxin]-dithiol. Functionally, catalyzes the reduction of methionine sulfoxide (MetSO) to methionine in proteins. Plays a protective role against oxidative stress by restoring activity to proteins that have been inactivated by methionine oxidation. MSRB family specifically reduces the MetSO R-enantiomer. This Arabidopsis thaliana (Mouse-ear cress) protein is Peptide methionine sulfoxide reductase B6 (MSRB6).